The primary structure comprises 154 residues: Aspartate carbamoyltransferase regulatory chain (154 aa).

Zn(2+) contacts are provided by Cys-109, Cys-114, Cys-138, and Cys-141.

The protein belongs to the PyrI family. In terms of assembly, contains catalytic and regulatory chains. It depends on Zn(2+) as a cofactor.

Its function is as follows. Involved in allosteric regulation of aspartate carbamoyltransferase. In Tolumonas auensis (strain DSM 9187 / NBRC 110442 / TA 4), this protein is Aspartate carbamoyltransferase regulatory chain.